A 237-amino-acid polypeptide reads, in one-letter code: Ribonuclease PH (237 aa).

Residues Arg-86 and 124-126 (GTR) each bind phosphate.

It belongs to the RNase PH family. As to quaternary structure, homohexameric ring arranged as a trimer of dimers.

It carries out the reaction tRNA(n+1) + phosphate = tRNA(n) + a ribonucleoside 5'-diphosphate. Phosphorolytic 3'-5' exoribonuclease that plays an important role in tRNA 3'-end maturation. Removes nucleotide residues following the 3'-CCA terminus of tRNAs; can also add nucleotides to the ends of RNA molecules by using nucleoside diphosphates as substrates, but this may not be physiologically important. Probably plays a role in initiation of 16S rRNA degradation (leading to ribosome degradation) during starvation. The polypeptide is Ribonuclease PH (Shewanella baltica (strain OS223)).